We begin with the raw amino-acid sequence, 296 residues long: Protein ea31 (296 aa).

The sequence is that of Protein ea31 (ea31) from Escherichia phage lambda (Bacteriophage lambda).